Reading from the N-terminus, the 228-residue chain is ATP synthase F(0) complex subunit a (228 aa).

6 helical membrane passes run 13–33, 70–90, 100–120, 140–160, 162–182, and 190–210; these read YFLGFPLMIFIAILISLTMFI, WALLLMTTLMFIFLNNITGLL, LSLNMAMAIPLWLGTIIMGAT, APFLIVIESISIIIRPLALGV, LTANITAGHLLIHLVSLALIN, and LFLTFSVFILLLILELAVSFI.

Belongs to the ATPase A chain family. In terms of assembly, component of the ATP synthase complex composed at least of ATP5F1A/subunit alpha, ATP5F1B/subunit beta, ATP5MC1/subunit c (homooctomer), MT-ATP6/subunit a, MT-ATP8/subunit 8, ATP5ME/subunit e, ATP5MF/subunit f, ATP5MG/subunit g, ATP5MK/subunit k, ATP5MJ/subunit j, ATP5F1C/subunit gamma, ATP5F1D/subunit delta, ATP5F1E/subunit epsilon, ATP5PF/subunit F6, ATP5PB/subunit b, ATP5PD/subunit d, ATP5PO/subunit OSCP. ATP synthase complex consists of a soluble F(1) head domain (subunits alpha(3) and beta(3)) - the catalytic core - and a membrane F(0) domain - the membrane proton channel (subunits c, a, 8, e, f, g, k and j). These two domains are linked by a central stalk (subunits gamma, delta, and epsilon) rotating inside the F1 region and a stationary peripheral stalk (subunits F6, b, d, and OSCP). Interacts with DNAJC30; interaction is direct.

The protein localises to the mitochondrion inner membrane. The enzyme catalyses H(+)(in) = H(+)(out). Functionally, subunit a, of the mitochondrial membrane ATP synthase complex (F(1)F(0) ATP synthase or Complex V) that produces ATP from ADP in the presence of a proton gradient across the membrane which is generated by electron transport complexes of the respiratory chain. ATP synthase complex consist of a soluble F(1) head domain - the catalytic core - and a membrane F(1) domain - the membrane proton channel. These two domains are linked by a central stalk rotating inside the F(1) region and a stationary peripheral stalk. During catalysis, ATP synthesis in the catalytic domain of F(1) is coupled via a rotary mechanism of the central stalk subunits to proton translocation. With the subunit c (ATP5MC1), forms the proton-conducting channel in the F(0) domain, that contains two crucial half-channels (inlet and outlet) that facilitate proton movement from the mitochondrial intermembrane space (IMS) into the matrix. Protons are taken up via the inlet half-channel and released through the outlet half-channel, following a Grotthuss mechanism. The sequence is that of ATP synthase F(0) complex subunit a from Myxine glutinosa (Atlantic hagfish).